The sequence spans 62 residues: Large ribosomal subunit protein bL28 (62 aa).

Belongs to the bacterial ribosomal protein bL28 family.

This chain is Large ribosomal subunit protein bL28, found in Helicobacter hepaticus (strain ATCC 51449 / 3B1).